The primary structure comprises 388 residues: Palmitoyltransferase ZDHHC18 (388 aa).

The segment at 1–67 is disordered; the sequence is MKDCEYQQIS…GSGSLGRRPR (67 aa). Over 1–90 the chain is Cytoplasmic; it reads MKDCEYQQIS…CGGRLMLAGH (90 aa). A compositionally biased stretch (low complexity) spans 10-27; the sequence is SPGAAPLPASPGARRPGP. Position 19 is a phosphoserine (serine 19). Positions 28 to 46 are enriched in pro residues; it reads AASPTPGPGPAPPAAPAPP. A helical transmembrane segment spans residues 91–111; it reads GGVFALTLLLILTTTGLFFVF. Over 112 to 119 the chain is Lumenal; it reads DCPYLARK. A helical transmembrane segment spans residues 120-140; the sequence is LTLAIPIIAAILFFFVMSCLL. At 141 to 235 the chain is on the cytoplasmic side; the sequence is QTSFTDPGIL…GNCVGRRNYR (95 aa). Residues 192–242 enclose the DHHC domain; it reads KYCFTCKMFRPPRTSHCSVCDNCVERFDHHCPWVGNCVGRRNYRFFYAFIL. The active-site S-palmitoyl cysteine intermediate is cysteine 222. Residues 236-256 traverse the membrane as a helical segment; it reads FFYAFILSLSFLTAFIFACVV. Over 257–277 the chain is Lumenal; it reads THLTLRAQGSNFLSTLKETPA. A helical membrane pass occupies residues 278-298; sequence SVLELVICFFSIWSILGLSGF. Residues 299-388 are Cytoplasmic-facing; that stretch reads HTYLVASNLT…PDASMVGGHP (90 aa). Residues 364–388 are disordered; sequence LPSPIRSDEPACRAKPDASMVGGHP. The span at 369 to 379 shows a compositional bias: basic and acidic residues; that stretch reads RSDEPACRAKP.

This sequence belongs to the DHHC palmitoyltransferase family. ERF2/ZDHHC9 subfamily. As to expression, widely expressed.

Its subcellular location is the golgi apparatus membrane. It carries out the reaction L-cysteinyl-[protein] + hexadecanoyl-CoA = S-hexadecanoyl-L-cysteinyl-[protein] + CoA. In terms of biological role, palmitoyltransferase that catalyzes the addition of palmitate onto various protein substrates, such as CGAS, HRAS and LCK. Acts as a negative regulator of the cGAS-STING pathway be mediating palmitoylation and inactivation of CGAS. May also have a palmitoyltransferase activity toward the beta-2 adrenergic receptor/ADRB2 and therefore regulate G protein-coupled receptor signaling. The protein is Palmitoyltransferase ZDHHC18 of Homo sapiens (Human).